A 160-amino-acid chain; its full sequence is MGVFNYETETTSVIPAARLFKAFILEGDTLIPKVAPQAISSVENIEGNGGPGTIKKITFPEGSPFKYVKERVDEVDHANFKYSYSMIEGGALGDTLEKICNEIKIVATPDGGSILKISNKYHTKGDHEMKAEHMKAIKEKGEALLRAVESYLLAHSDAYN.

Brassinolide-binding residues include Lys55, Tyr82, Tyr84, and Asn101.

It belongs to the BetVI family.

The protein localises to the cytoplasm. In terms of biological role, may be a general steroid carrier protein. This is Major pollen allergen Bet v 1-B (BETV1B) from Betula pendula (European white birch).